The primary structure comprises 211 residues: Small ribosomal subunit protein uS4 (211 aa).

The interval 27–48 is disordered; it reads GRKVLERRGSQPPGQHGASVRR. Positions 99–162 constitute an S4 RNA-binding domain; it reads RRLDNVVFRL…RKRDYFKDLE (64 aa).

The protein belongs to the universal ribosomal protein uS4 family. As to quaternary structure, part of the 30S ribosomal subunit. Contacts protein S5. The interaction surface between S4 and S5 is involved in control of translational fidelity.

Functionally, one of the primary rRNA binding proteins, it binds directly to 16S rRNA where it nucleates assembly of the body of the 30S subunit. In terms of biological role, with S5 and S12 plays an important role in translational accuracy. This Herpetosiphon aurantiacus (strain ATCC 23779 / DSM 785 / 114-95) protein is Small ribosomal subunit protein uS4.